A 185-amino-acid chain; its full sequence is Peptide deformylase (185 aa).

2 residues coordinate Fe cation: cysteine 112 and histidine 155. Glutamate 156 is a catalytic residue. Histidine 159 provides a ligand contact to Fe cation.

It belongs to the polypeptide deformylase family. Fe(2+) is required as a cofactor.

It catalyses the reaction N-terminal N-formyl-L-methionyl-[peptide] + H2O = N-terminal L-methionyl-[peptide] + formate. Removes the formyl group from the N-terminal Met of newly synthesized proteins. Requires at least a dipeptide for an efficient rate of reaction. N-terminal L-methionine is a prerequisite for activity but the enzyme has broad specificity at other positions. This is Peptide deformylase from Latilactobacillus sakei subsp. sakei (strain 23K) (Lactobacillus sakei subsp. sakei).